The sequence spans 527 residues: MNSPCDRLQQFIQVLLEESWSFPSFANTLHWPENLLSYIDELVWQGSLQNFHQHEVRFDKPPLRLPLTGFSSLTENWSSRQAVSSRLVATAASPPAGCQAPIAFLGLKFSSLGPARKNPALCFLYDQSNSKCNTSWVKENVGCPWHWCNIHEALIRTEKGSDPMFYVNTSTGGRDGFNGFNLQISDPWDPRWASGVDGGLYEHKTFMYPVAKIRIARTLKTTVTGLSDLASSIQSAEKELTSQLQPAADQAKSSRFSWLTLISEGAQLLQSTGVQNLSHCFLCAALRRPPLVAVPLPTPFNYTINSSTPIPPVPKGQVPLFSDPIRHKFPFCYSTPNASWCNQTRMLTSTPAPPRGYFWCNSTLTKVLNSTGNHTLCLPISLIPGLTLYSQDELSHLLAWTEPRPQNKSKWAIFLPLVLGISLASSLVASGLGKGALTHSIQTSQDLSTHLQLAIEASAESLDSLQRQITTVAQVAAQNRQALDLLMAEKGRTCLFLQEECCYYLNESGVVENSLQTLKKKKSSKRS.

Residues 1–411 form a surface protein region; it reads MNSPCDRLQQ…EPRPQNKSKW (411 aa). The short motif at 280-283 is the CXXC element; the sequence is CFLC. A fusion peptide region spans residues 412–432; sequence AIFLPLVLGISLASSLVASGL. The tract at residues 412–527 is transmembrane protein; the sequence is AIFLPLVLGI…LKKKKSSKRS (116 aa). The CKS-17 motif lies at 477–493; the sequence is AQNRQALDLLMAEKGRT. A disulfide bond links Cys494 and Cys501. The CX6CC motif lies at 494–502; it reads CLFLQEECC.

This sequence belongs to the gamma type-C retroviral envelope protein family. HERV class-I F(c)2 env subfamily. The CXXC motif is highly conserved across a broad range of retroviral envelope proteins. It is thought to participate in the formation of a labile disulfide bond possibly with the CX6CC motif present in the transmembrane domain. Low expression in skin and testis.

Its subcellular location is the virion. Functionally, retroviral envelope proteins mediate receptor recognition and membrane fusion during early infection. Endogenous envelope proteins may have kept, lost or modified their original function during evolution. This endogenous envelope protein has lost its original fusogenic properties. The protein is Endogenous retrovirus group FC1 member 1 Env polyprotein (ERVFC1-1) of Homo sapiens (Human).